A 102-amino-acid polypeptide reads, in one-letter code: Phosphoribosyl-ATP pyrophosphatase (102 aa).

The protein belongs to the PRA-PH family.

It is found in the cytoplasm. The enzyme catalyses 1-(5-phospho-beta-D-ribosyl)-ATP + H2O = 1-(5-phospho-beta-D-ribosyl)-5'-AMP + diphosphate + H(+). It participates in amino-acid biosynthesis; L-histidine biosynthesis; L-histidine from 5-phospho-alpha-D-ribose 1-diphosphate: step 2/9. The polypeptide is Phosphoribosyl-ATP pyrophosphatase (Dinoroseobacter shibae (strain DSM 16493 / NCIMB 14021 / DFL 12)).